A 484-amino-acid polypeptide reads, in one-letter code: Glutathione reductase (484 aa).

2 residues coordinate FAD: Ser-32 and Gly-33. Ser-32 is a glutathione binding site. Arg-39 contacts glutathione. FAD-binding residues include Glu-52, Thr-59, Cys-60, and Lys-68. Residues Cys-60 and Cys-65 are joined by a disulfide bond. Glutathione is bound at residue Tyr-122. Residue Ala-138 coordinates FAD. NADP(+)-binding residues include Ala-204, Ile-207, Glu-210, Arg-227, and Arg-233. Thr-242 is a glutathione binding site. NADP(+) is bound at residue Gly-293. Asp-333 contributes to the FAD binding site. Position 339 (Glu-339) interacts with NADP(+). Thr-341 provides a ligand contact to FAD. Arg-349 serves as a coordination point for glutathione. An NADP(+)-binding site is contributed by Val-374. Residue Lys-426 coordinates glutathione. His-473 lines the FAD pocket. His-473 acts as the Proton acceptor in catalysis.

It belongs to the class-I pyridine nucleotide-disulfide oxidoreductase family. In terms of assembly, homodimer. FAD serves as cofactor.

It is found in the cytoplasm. The protein resides in the mitochondrion. The catalysed reaction is 2 glutathione + NADP(+) = glutathione disulfide + NADPH + H(+). Catalyzes the reduction of glutathione disulfide (GSSG) to reduced glutathione (GSH). Constitutes the major mechanism to maintain a high GSH:GSSG ratio in the cytosol. This is Glutathione reductase (GLR1) from Kluyveromyces lactis (strain ATCC 8585 / CBS 2359 / DSM 70799 / NBRC 1267 / NRRL Y-1140 / WM37) (Yeast).